Consider the following 70-residue polypeptide: Brevinin-ALb (70 aa).

The N-terminal stretch at 1 to 22 (MFTLKKSLLLLFFLGTINLSLC) is a signal peptide. The propeptide occupies 23 to 46 (EQERDADEEERRDDDEMDVEVEKR). A disulfide bond links Cys-64 and Cys-70.

In terms of tissue distribution, expressed by the skin glands.

It localises to the secreted. In terms of biological role, antimicrobial peptide with activity against Gram-positive and Gram-negative bacteria and against fungi. Has been tested against S.aureus (MIC=5.5 ug/mL), E.coli (MIC=6.5 ug/mL), B.dysenteriae (MIC=2.2 ug/mL), and C.albicans (MIC=7.5 ug/mL). Can regulate or mediate antimicrobial response by stimulating mast cell degranulation. Induces histamine release. Shows cytotoxicity toward solid tumor cell line HepG2. Also shows a potent hemolytic activity (LD(50)=5 ug/ml). The sequence is that of Brevinin-ALb from Amolops loloensis (Lolokou Sucker Frog).